We begin with the raw amino-acid sequence, 88 residues long: Phosphocarrier protein HPr (88 aa).

The HPr domain occupies 1-88; that stretch reads MEQKSYVIID…DILSKEGLTK (88 aa). H15 serves as the catalytic Pros-phosphohistidine intermediate. Residue S46 is modified to Phosphoserine; by HPrK/P.

This sequence belongs to the HPr family.

The protein localises to the cytoplasm. Its activity is regulated as follows. Phosphorylation on Ser-46 inhibits the phosphoryl transfer from enzyme I to HPr. In terms of biological role, general (non sugar-specific) component of the phosphoenolpyruvate-dependent sugar phosphotransferase system (sugar PTS). This major carbohydrate active-transport system catalyzes the phosphorylation of incoming sugar substrates concomitantly with their translocation across the cell membrane. The phosphoryl group from phosphoenolpyruvate (PEP) is transferred to the phosphoryl carrier protein HPr by enzyme I. Phospho-HPr then transfers it to the PTS EIIA domain. The polypeptide is Phosphocarrier protein HPr (ptsH) (Staphylococcus xylosus).